The chain runs to 208 residues: Uracil phosphoribosyltransferase (208 aa).

5-phospho-alpha-D-ribose 1-diphosphate-binding positions include R78, R103, and 130–138 (DPMLATGGS). Uracil contacts are provided by residues I193 and 198 to 200 (GDA). Position 199 (D199) interacts with 5-phospho-alpha-D-ribose 1-diphosphate.

Belongs to the UPRTase family. It depends on Mg(2+) as a cofactor.

It carries out the reaction UMP + diphosphate = 5-phospho-alpha-D-ribose 1-diphosphate + uracil. The protein operates within pyrimidine metabolism; UMP biosynthesis via salvage pathway; UMP from uracil: step 1/1. Allosterically activated by GTP. Functionally, catalyzes the conversion of uracil and 5-phospho-alpha-D-ribose 1-diphosphate (PRPP) to UMP and diphosphate. The chain is Uracil phosphoribosyltransferase from Yersinia enterocolitica serotype O:8 / biotype 1B (strain NCTC 13174 / 8081).